The following is a 147-amino-acid chain: Leghemoglobin 6 (147 aa).

Positions 2–147 constitute a Globin domain; it reads SFTDKQEALV…LATEIKKAMS (146 aa). Tyrosine 25 and tyrosine 30 each carry nitrated tyrosine. Serine 45 contacts heme b. At serine 45 the chain carries Phosphoserine. Residue histidine 62 participates in O2 binding. Heme b is bound by residues lysine 65, histidine 94, and lysine 97. Residue tyrosine 135 is modified to Nitrated tyrosine.

This sequence belongs to the plant globin family. Monomer. Post-translationally, nitrated in effective nodules and particularly in hypoxic conditions; this mechanism may play a protective role in the symbiosis by buffering toxic peroxynitrite NO(2)(-). Nitration level decrease during nodule senescence. Phosphorylation at Ser-45 disrupts the molecular environment of its porphyrin ring oxygen binding pocket, thus leading to a reduced oxygen consumption and to the delivery of oxygen O(2) to symbiosomes. Root nodules.

Its subcellular location is the cytoplasm. It is found in the cytosol. The protein localises to the nucleus. Its function is as follows. Leghemoglobin that reversibly binds oxygen O(2) through a pentacoordinated heme iron. In root nodules, facilitates the diffusion of oxygen to the bacteroids while preventing the bacterial nitrogenase from being inactivated by buffering dioxygen, nitric oxide and carbon monoxide, and promoting the formation of reactive oxygen species (ROS, e.g. H(2)O(2)). This role is essential for symbiotic nitrogen fixation (SNF). The polypeptide is Leghemoglobin 6 (Medicago truncatula (Barrel medic)).